The following is a 435-amino-acid chain: Glutamyl-tRNA reductase (435 aa).

Substrate contacts are provided by residues 49 to 52, Ser-109, 114 to 116, and Gln-120; these read TCNR and ETQ. The active-site Nucleophile is the Cys-50. 189–194 is a binding site for NADP(+); that stretch reads GAGEMS.

The protein belongs to the glutamyl-tRNA reductase family. As to quaternary structure, homodimer.

The enzyme catalyses (S)-4-amino-5-oxopentanoate + tRNA(Glu) + NADP(+) = L-glutamyl-tRNA(Glu) + NADPH + H(+). The protein operates within porphyrin-containing compound metabolism; protoporphyrin-IX biosynthesis; 5-aminolevulinate from L-glutamyl-tRNA(Glu): step 1/2. Functionally, catalyzes the NADPH-dependent reduction of glutamyl-tRNA(Glu) to glutamate 1-semialdehyde (GSA). The protein is Glutamyl-tRNA reductase of Listeria monocytogenes serotype 4b (strain CLIP80459).